The chain runs to 161 residues: Ribonuclease P protein component (161 aa).

It belongs to the RnpA family. In terms of assembly, consists of a catalytic RNA component (M1 or rnpB) and a protein subunit.

The catalysed reaction is Endonucleolytic cleavage of RNA, removing 5'-extranucleotides from tRNA precursor.. RNaseP catalyzes the removal of the 5'-leader sequence from pre-tRNA to produce the mature 5'-terminus. It can also cleave other RNA substrates such as 4.5S RNA. The protein component plays an auxiliary but essential role in vivo by binding to the 5'-leader sequence and broadening the substrate specificity of the ribozyme. This Helicobacter pylori (strain J99 / ATCC 700824) (Campylobacter pylori J99) protein is Ribonuclease P protein component.